A 688-amino-acid chain; its full sequence is MMLNKKVVALCTLTLHLFCIFLCLGKEVRSEENGKIQDDAKKIVSELRFLEKVEDVIEKSNIGGNEVDADENSFNPDTEVPIEEIEEIKMRELKDVKEEKNKNDNHNNNNNNISSSSSSSSNTFGEEKEEVSKKKKKLRLIVSENHATTPSFFQESLLEPDVLSFLESKGNLSNLKNINSMIIELKEDTTDDELISYIKILEEKGALIESDKLVSADNIDISGIKDAIRRGEENIDVNDYKSMLEVENDAEDYDKMFGMFNESHAATSKRKRHSTNERGYDTFSSPSYKTYSKSDYLYDDDNNNNNYYYSHSSNGHNSSSRNSSSSRSRPGKYHFNDEFRNLQWGLDLSRLDETQELINEHQVMSTRICVIDSGIDYNHPDLKDNIELNLKELHGRKGFDDDNNGIVDDIYGANFVNNSGNPMDDNYHGTHVSGIISAIGNNNIGVVGVDVNSKLIICKALDEHKLGRLGDMFKCLDYCISRNAHMINGSFSFDEYSGIFNSSVEYLQRKGILFFVSASNCSHPKSSTPDIRKCDLSINAKYPPILSTVYDNVISVANLKKNDNNNHYSLSINSFYSNKYCQLAAPGTNIYSTAPHNSYRKLNGTSMAAPHVAAIASLIFSINPDLSYKKVIQILKDSIVYLPSLKNMVAWAGYADINKAVNLAIKSKKTYINSNISNKWKKKSRYLH.

Positions 1–25 are cleaved as a signal peptide; that stretch reads MMLNKKVVALCTLTLHLFCIFLCLG. Residues 26–217 constitute a propeptide, inhibition peptide; the sequence is KEVRSEENGK…IESDKLVSAD (192 aa). The segment at 99-129 is disordered; the sequence is EKNKNDNHNNNNNNISSSSSSSSNTFGEEKE. Over residues 106–122 the composition is skewed to low complexity; it reads HNNNNNNISSSSSSSSN. An N-linked (GlcNAc...) asparagine glycan is attached at Asn112. 3 residues coordinate Ca(2+): Asn145, Thr148, and Pro150. N-linked (GlcNAc...) asparagine glycosylation is present at Asn171. Gly205 provides a ligand contact to Ca(2+). Asn261 carries an N-linked (GlcNAc...) asparagine glycan. Disordered regions lie at residues 264 to 284 and 303 to 332; these read HAATSKRKRHSTNERGYDTFS and NNNNYYYSHSSNGHNSSSRNSSSSRSRPGK. Residues 303–328 are compositionally biased toward low complexity; that stretch reads NNNNYYYSHSSNGHNSSSRNSSSSRS. N-linked (GlcNAc...) asparagine glycans are attached at residues Asn317 and Asn322. Asp337 is a binding site for Ca(2+). The 319-residue stretch at 343–661 folds into the Peptidase S8 domain; that stretch reads QWGLDLSRLD…AGYADINKAV (319 aa). 2 disulfides stabilise this stretch: Cys369-Cys479 and Cys458-Cys475. The active-site Charge relay system is the Asp372. Positions 381, 392, 396, 399, 400, 401, 402, 404, 406, 408, and 409 each coordinate Ca(2+). N-linked (GlcNAc...) asparagine glycosylation is present at Asn417. His428 acts as the Charge relay system in catalysis. Ile439, Asn442, Ile444, and Val446 together coordinate Ca(2+). Residues Asn488, Asn501, and Asn520 are each glycosylated (N-linked (GlcNAc...) asparagine). Cys521 and Cys534 form a disulfide bridge. Asn603 carries N-linked (GlcNAc...) asparagine glycosylation. The active-site Charge relay system is Ser606. Asn675 is a glycosylation site (N-linked (GlcNAc...) asparagine).

The protein belongs to the peptidase S8 family. Heterodimer between p54 form and prodomain p31; the interaction inhibits p54 catalytic activity. Heterodimer p31-p54 is monomeric at basic pH and dimeric at acidic pH; dimerization is driven by the N-terminal prodomain (p31). It depends on Ca(2+) as a cofactor. The prodomain (p31) is cleaved, probably by autocatalysis, during the transport to or in the Golgi apparatus, and remains non-covalently associated with the p54 form as an inhibitor. p54 is further cleaved into the p47 form. The p54-to-p47 conversion can be also autocatalytic. This cleavage is likely occurring in the exoneme prior to egress and is mediated by PMX/plasmepsin X. Heterodimer p31-p54 is activated by cleavage of prodomain (p31) by the aspartic protease PMX; cleavage by PMX abolishes inhibitory capacity of p31. Primary autocatalytic processing of SUB1 is essential for parasite growth; the p54-to-p47 conversion is dispensable for SUB1 functions in the parasites. In terms of processing, the disulfide bond between Cys-521 and Cys-534 acts as a redox-sensitive disulfide switch. The oxidized form is required for catalytic activity. Post-translationally, the relevance of the N-glycosylation is not clear. In an insect expression system, SUB1 glycosylation appears to affect its processing into the active mature form suggesting that SUB1 may not be N-glycosylated in parasites.

The protein localises to the secreted. The protein resides in the parasitophorous vacuole lumen. It catalyses the reaction Hydrolysis of proteins with broad specificity for peptide bonds, and a preference for a large uncharged residue in P1. Hydrolyzes peptide amides.. With respect to regulation, p54 and probably p47 forms are inhibited by the non-covalent interaction with the cleaved propeptide. Inhibited by subtilisin propeptide-like protein SUB1-ProM. Inhibited by small molecule MRT12113. Its function is as follows. Serine protease which plays an essential role in merozoite invasion of and egress from host erythrocytes by processing and activating various merozoite surface and parasitophorous vacuole proteins. Mediates the proteolytic maturation of serine proteases SERA4, SERA5 and SERA6 just prior to merozoite egress. Prior to merozoite egress, cleaves merozoite surface proteins MSP1, MSP6 and MSP7, which form the MSP1/6/7 complex, and thereby may prime the parasite cell surface for invasion of fresh erythrocytes. Prior to merozoite egress, cleaves MSRP2 converting it to MSRP2 p25 form, and RAP1 converting it to RAP1 p67 form. This chain is Subtilisin-like protease 1, found in Plasmodium falciparum (isolate 3D7).